The chain runs to 505 residues: MAESQSQGADQAQDLNNELKARREKLVTLRENGIAFPNDFRRDSISDHLHAEFDAKENEELEELGIEVTVAGRMMTRRIMGKASFVTLQDVGGRIQLYVSRDDLAEGIYNEQFKKWDLGDILGARGKLFKTKTGELSIHCTELRLLTKALRPLPDKFHGLADQETRYRQRYLDLIANDDSRNTFRIRSNVMAAIRRFMVDNGFMEVETPMMQVIPGGASARPFITHHNALDIDMYLRIAPELYLKRLVVGGFERVFEINRNFRNEGVSPRHNPEFTMMELYMAYADYKDLIVLTENLFRTLTQDVLGSTTVVYGDQTFDFGKPFDKLTMREAICKYRPETNVADLDDLEKATAIALSLGIKIEKSWGLGRIVTEIFEETAESSLIQPTFITEYPAEVSPLARRNDQNSEITDRFEFFIGGREIGNGFSELNDAEDQAERFAQQVNAKDAGDDEAMFYDEDYVTALEHGLPPTAGLGIGIDRMVMLFTNSHTIRDVILFPAMRPQK.

Mg(2+) contacts are provided by E415 and E422.

It belongs to the class-II aminoacyl-tRNA synthetase family. Homodimer. Mg(2+) serves as cofactor.

Its subcellular location is the cytoplasm. It carries out the reaction tRNA(Lys) + L-lysine + ATP = L-lysyl-tRNA(Lys) + AMP + diphosphate. This chain is Lysine--tRNA ligase, found in Pectobacterium atrosepticum (strain SCRI 1043 / ATCC BAA-672) (Erwinia carotovora subsp. atroseptica).